A 222-amino-acid polypeptide reads, in one-letter code: MGQKVNPHGLRVGVIKEWNAKWYANSKNFSSYLVQDNKIRKFVKNKLSSAGVSRIEIERAAKRVKLNIHTAKPGMVIGKGGQGIEALKKDLVNFVDKENVLINIVEVKNSDANAQLMAENIAQQLERRISFRRAMKQTIQRAMRTGAKGVKTACAGRLAGAEIARTEQYHEGTIPLQTLRADIDYGFAEADTTYGKIGVKVWVYNGEILPTKKIEKKEEANA.

One can recognise a KH type-2 domain in the interval 39-108; that stretch reads IRKFVKNKLS…NVLINIVEVK (70 aa).

It belongs to the universal ribosomal protein uS3 family. In terms of assembly, part of the 30S ribosomal subunit. Forms a tight complex with proteins S10 and S14.

Binds the lower part of the 30S subunit head. Binds mRNA in the 70S ribosome, positioning it for translation. The protein is Small ribosomal subunit protein uS3 of Clostridium acetobutylicum (strain ATCC 824 / DSM 792 / JCM 1419 / IAM 19013 / LMG 5710 / NBRC 13948 / NRRL B-527 / VKM B-1787 / 2291 / W).